A 347-amino-acid polypeptide reads, in one-letter code: Phenylalanine--tRNA ligase alpha subunit (347 aa).

Glu-265 lines the Mg(2+) pocket.

This sequence belongs to the class-II aminoacyl-tRNA synthetase family. Phe-tRNA synthetase alpha subunit type 1 subfamily. In terms of assembly, tetramer of two alpha and two beta subunits. The cofactor is Mg(2+).

The protein resides in the cytoplasm. It carries out the reaction tRNA(Phe) + L-phenylalanine + ATP = L-phenylalanyl-tRNA(Phe) + AMP + diphosphate + H(+). This chain is Phenylalanine--tRNA ligase alpha subunit, found in Wolbachia sp. subsp. Brugia malayi (strain TRS).